An 814-amino-acid chain; its full sequence is Rho GTPase-activating protein 26 (814 aa).

The BAR domain occupies 7 to 262 (EFSDCCLDSP…MKENPLEHKT (256 aa)). Positions 265 to 369 (PYTMEGYLYV…WMEAMDGREP (105 aa)) constitute a PH domain. One can recognise a Rho-GAP domain in the interval 383-568 (AQLDSIGFSI…ILIENHEKIF (186 aa)). Disordered stretches follow at residues 584-618 (SRKKSSDSKPPSCSKRPLTLFHAVPSTEKQEQRNS) and 638-696 (SSSL…SSDS). Low complexity-rich tracts occupy residues 591–600 (SKPPSCSKRP) and 638–661 (SSSLQPNLNSSDSNLDVVKPSRPS). A compositionally biased stretch (pro residues) spans 662-672 (SLPPNPSPTSP). Ser668 is modified (phosphoserine). Phosphothreonine is present on Thr670. Ser671 carries the post-translational modification Phosphoserine. Positions 673-696 (LSPSWPMFSAPSSPMPTSSTSSDS) are enriched in low complexity. One can recognise an SH3 domain in the interval 756–814 (TPFRKAKALYACQAEHDSELSFTAGTVFDNVHPSQEPGWLEGTLNGKTGLIPENYVEFL).

In terms of assembly, interacts with NYAP1, NYAP2 and MYO16. Interacts with MICAL1 and WDR44. Binds to the C-terminus of PTK2/FAK1. In terms of processing, phosphorylated in a PINK1-dependent fashion promoting retrograde mitochondrial trafficking and clustering.

It localises to the cell junction. The protein localises to the focal adhesion. It is found in the cytoplasm. The protein resides in the cytoskeleton. Its subcellular location is the endosome membrane. Its function is as follows. GTPase-activating protein for RHOA and CDC42. Facilitates mitochondrial quality control by promoting Parkin-mediated recruitment of autophagosomes to damaged mitochondria. Associates with MICAL1 on the endosomal membrane to promote Rab8-Rab10-dependent tubule extension. After dissociation of MICAL1, recruits WDR44 which connects the endoplasmic reticulum (ER) with the endosomal tubule, thereby participating in the export of a subset of neosynthesized proteins. This chain is Rho GTPase-activating protein 26 (Arhgap26), found in Mus musculus (Mouse).